Here is a 210-residue protein sequence, read N- to C-terminus: Peptidyl-tRNA hydrolase (210 aa).

Tyr14 is a tRNA binding site. His19 acts as the Proton acceptor in catalysis. TRNA-binding residues include Phe64, Asn66, and Asn112.

This sequence belongs to the PTH family. In terms of assembly, monomer.

It localises to the cytoplasm. It carries out the reaction an N-acyl-L-alpha-aminoacyl-tRNA + H2O = an N-acyl-L-amino acid + a tRNA + H(+). Hydrolyzes ribosome-free peptidyl-tRNAs (with 1 or more amino acids incorporated), which drop off the ribosome during protein synthesis, or as a result of ribosome stalling. Functionally, catalyzes the release of premature peptidyl moieties from peptidyl-tRNA molecules trapped in stalled 50S ribosomal subunits, and thus maintains levels of free tRNAs and 50S ribosomes. This Methylorubrum populi (strain ATCC BAA-705 / NCIMB 13946 / BJ001) (Methylobacterium populi) protein is Peptidyl-tRNA hydrolase.